Consider the following 1061-residue polypeptide: MGKGGEDCGNKQTNSSELVKSDTFPAWGKDVSECEEKFGVSREKGLSTDEVLKRHQIYGLNELEKPEGTSIFKLILEQFNDTLVRILLAAAVISFVLAFFDGDEGGEMGITAFVEPLVIFLILIVNAIVGIWQETNAEKALEALKEIQSQQATVMRDGTKVSSLPAKELVPGDIVELRVGDKVPADMRVVALISSTLRVEQGSLTGESEAVSKTTKHVDENADIQGKKCMVFAGTTVVNGNCICLVTDTGMNTEIGRVHSQIQEAAQHEEDTPLKKKLNEFGEVLTMIIGLICALVWLINVKYFLSWEYVDGWPRNFKFSFEKCTYYFEIAVALAVAAIPEGLPAVITTCLALGTRKMAQKNALVRKLPSVETLGCTTVICSDKTGTLTTNQMAVSKLVAMGSRIGTLRSFNVEGTSFDPRDGKIEDWPTGRMDANLQMIAKIAAICNDANVEKSDQQFVSRGMPTEAALKVLVEKMGFPEGLNEASSDGNVLRCCRLWSELEQRIATLEFDRDRKSMGVMVDSSSGKKLLLVKGAVENVLERSTHIQLLDGSTRELDQYSRDLILQSLHDMSLSALRCLGFAYSDVPSDFATYDGSEDHPAHQQLLNPSNYSSIESNLVFVGFVGLRDPPRKEVRQAIADCRTAGIRVMVITGDNKSTAEAICREIGVFEADEDISSRSLTGKEFMDVKDQKNHLRQTGGLLFSRAEPKHKQEIVRLLKEDGEVVAMTGDGVNDAPALKLADIGVAMGISGTEVAKEASDLVLADDNFSTIVAAVGEGRSIYNNMKAFIRYMISSNIGEVASIFLTAALGIPEGMIPVQLLWVNLVTDGPPATALGFNPPDKDIMKKPPRRSDDSLITAWILFRYMVIGLYVGVATVGVFIIWYTHNSFMGIDLSQDGHSLVSYSQLAHWGQCSSWEGFKVSPFTAGSQTFSFDSNPCDYFQQGKIKASTLSLSVLVAIEMFNSLNALSEDGSLVTMPPWVNPWLLLAMAVSFGLHFVILYVPFLAQVFGIVPLSLNEWLLVLAVSLPVILIDEVLKFVGRCTSGYRYSPRTPSAKQKEE.

Residues 1–21 (MGKGGEDCGNKQTNSSELVKS) are disordered. Residues 1-70 (MGKGGEDCGN…NELEKPEGTS (70 aa)) are Cytoplasmic-facing. A helical transmembrane segment spans residues 71–91 (IFKLILEQFNDTLVRILLAAA). The Lumenal portion of the chain corresponds to 92-115 (VISFVLAFFDGDEGGEMGITAFVE). The chain crosses the membrane as a helical span at residues 116–135 (PLVIFLILIVNAIVGIWQET). Residues 136 to 278 (NAEKALEALK…EEDTPLKKKL (143 aa)) lie on the Cytoplasmic side of the membrane. A helical transmembrane segment spans residues 279-298 (NEFGEVLTMIIGLICALVWL). The Lumenal segment spans residues 299–327 (INVKYFLSWEYVDGWPRNFKFSFEKCTYY). Residues 328–345 (FEIAVALAVAAIPEGLPA) traverse the membrane as a helical segment. Ca(2+) is bound by residues valine 336, alanine 337, isoleucine 339, and glutamate 341. Residues 346 to 786 (VITTCLALGT…GEGRSIYNNM (441 aa)) are Cytoplasmic-facing. Residue aspartate 383 is the 4-aspartylphosphate intermediate of the active site. Residues aspartate 731 and aspartate 735 each contribute to the Mg(2+) site. A helical transmembrane segment spans residues 787–806 (KAFIRYMISSNIGEVASIFL). 2 residues coordinate Ca(2+): asparagine 797 and glutamate 800. Topologically, residues 807-816 (TAALGIPEGM) are lumenal. Residues 817 to 837 (IPVQLLWVNLVTDGPPATALG) form a helical membrane-spanning segment. 3 residues coordinate Ca(2+): asparagine 825, threonine 828, and aspartate 829. At 838–857 (FNPPDKDIMKKPPRRSDDSL) the chain is on the cytoplasmic side. Residues 858-880 (ITAWILFRYMVIGLYVGVATVGV) form a helical membrane-spanning segment. Topologically, residues 881 to 950 (FIIWYTHNSF…YFQQGKIKAS (70 aa)) are lumenal. The chain crosses the membrane as a helical span at residues 951 to 970 (TLSLSVLVAIEMFNSLNALS). Glutamate 961 lines the Ca(2+) pocket. Residues 971–983 (EDGSLVTMPPWVN) lie on the Cytoplasmic side of the membrane. The chain crosses the membrane as a helical span at residues 984-1002 (PWLLLAMAVSFGLHFVILY). At 1003–1017 (VPFLAQVFGIVPLSL) the chain is on the lumenal side. Residues 1018–1038 (NEWLLVLAVSLPVILIDEVLK) form a helical membrane-spanning segment. Topologically, residues 1039-1061 (FVGRCTSGYRYSPRTPSAKQKEE) are cytoplasmic.

Belongs to the cation transport ATPase (P-type) (TC 3.A.3) family. Type IIA subfamily.

It localises to the membrane. It carries out the reaction Ca(2+)(in) + ATP + H2O = Ca(2+)(out) + ADP + phosphate + H(+). Functionally, this magnesium-dependent enzyme catalyzes the hydrolysis of ATP coupled with the translocation of calcium from the cytosol to an endomembrane compartment. This is Calcium-transporting ATPase 4, endoplasmic reticulum-type (ECA4) from Arabidopsis thaliana (Mouse-ear cress).